Here is a 359-residue protein sequence, read N- to C-terminus: Peptide chain release factor 1 (359 aa).

Glutamine 235 is subject to N5-methylglutamine. The interval 287 to 312 is disordered; it reads AQEASAMRSAQVGSGDRSERIRTYNF.

Belongs to the prokaryotic/mitochondrial release factor family. In terms of processing, methylated by PrmC. Methylation increases the termination efficiency of RF1.

The protein localises to the cytoplasm. In terms of biological role, peptide chain release factor 1 directs the termination of translation in response to the peptide chain termination codons UAG and UAA. The sequence is that of Peptide chain release factor 1 from Chlamydia trachomatis serovar A (strain ATCC VR-571B / DSM 19440 / HAR-13).